The following is a 132-amino-acid chain: Dinoflagellate viral nucleoprotein 5 (132 aa).

The span at 1–44 shows a compositional bias: basic residues; it reads MAAMKKAMKVKKSAKKSAKKSGKKGGMKKKAKRVSKVARGKRAK. The disordered stretch occupies residues 1–84; it reads MAAMKKAMKV…KKQSEHGKKI (84 aa). Residues 57-66 are compositionally biased toward polar residues; it reads GGLTKNSLVK.

In terms of processing, phosphorylated.

It is found in the nucleus. It localises to the chromosome. DNA-binding protein, which similarly to histones, may compact DNA into chromatin. This chain is Dinoflagellate viral nucleoprotein 5, found in Hematodinium sp.